We begin with the raw amino-acid sequence, 553 residues long: MSPAPAILALRRVYNFCLLVDEAHGFMALGKSGRGSFEWWQDCGYDCPLQEVDIMTGTMSKSLCCIGGFVSANGVYAAELERQRTLQHQNGAETLSTAVLVRILSLINKPKLIKERMTALGRKASFVADCLAQAGCDILSSYGSPVVCFPVGTIQQASRFHEEAMERGFAVACGVPPATPLWSCRVRVCIFATTSWEDILDLINMIIKVSCKLQLKGITATVFTPDTLPKQYLDDPSIAEQSIKSDASICSYVESLSKTYPGGDLEAKAPLNLAQSQEAVEASVKAFSKYGLGPSSARWFYGTFDVFIALERRLAKLYPSLQRHSGRCRAMLGTDAHTMMLSLLSACANPYTSGVMNILLIPTTASLAVQDGADLNRPRAETKIIYYEKLDNLVAKLRELPIDASKLHLTLYLQTTSHDGSSILDLPATVQMINSGMNDPNQLKGLKLILDDSGGLGKVGPHHLGYLDLMERDHGVSFLNQSLGIKLAPKTEIIVTGSFFNAFGQQGGYIISSASFIEVHTVSSKSFVFSTPPTPIQAALSGKVLEILSRGTC.

Positions 1-25 (MSPAPAILALRRVYNFCLLVDEAHG) are cleaved as a signal peptide. Asn480 carries N-linked (GlcNAc...) asparagine glycosylation.

The protein belongs to the class-II pyridoxal-phosphate-dependent aminotransferase family. BioF subfamily. Pyridoxal 5'-phosphate serves as cofactor.

Its subcellular location is the endoplasmic reticulum. It functions in the pathway mycotoxin biosynthesis. In terms of biological role, aminotransferase; part of the gene cluster that mediates the biosynthesis of fumonisins B1 (FB1), B2 (FB2), B3 (FB3), and B4 (FB4), which are carcinogenic mycotoxins. Within the pathway, FUM8 catalyzes the release of the C-18 polyketide chain from the highly reducing polyketide synthase FUM1 by a nucleophilic attack of a carbanion, which is derived from R-carbon of alanine by decarboxylation, on the carbonyl carbon of polyketide acyl chain. The biosynthesis starts with the FUM1-catalyzed carbon chain assembly from one molecule of acetyl-CoA, eight molecules of malonyl-CoA, and two molecules of methionine (in S-adenosyl form). The C18 polyketide chain is released from the enzyme by a nucleophilic attack of a carbanion, which is derived from R-carbon of alanine by decarboxylation, on the carbonyl carbon of polyketide acyl chain. This step is catalyzed by the pyridoxal 5'-phosphate-dependent aminoacyl transferase FUM8. The resultant 3-keto intermediate is then stereospecifically reduced to a 3-hydroxyl product by reductase FUM13. Subsequent oxidations at C-10 by the cytochrome P450 monooxygenase FUM2, C-14 and C-15 by FUM6, FUM12 or FUM15, tricarballylic esterification of the hydroxyl groups on C-14 and C-15 by acyltransferase FUM14, and C-5 hydroxylation by 2-keto-glutarate-dependent dioxygenase FUM3 furnish the biosynthesis of fumonisins. The tricarballylic moieties are most likely derived from the citric acid cycle, and their addition to the carbon backbone may involve FUM7, FUM10, FUM11 and FUM14. In Gibberella moniliformis (strain M3125 / FGSC 7600) (Maize ear and stalk rot fungus), this protein is Aminotransferase FUM8.